Here is a 124-residue protein sequence, read N- to C-terminus: MSTINQLVRNPRKKKVIKSGVPALDSCPQKRGVCTRVYTTTPKKPNSALRKVARVRLTNANEVTTYIGGEGHNLQEHSVILIRGGRVKDLPGVRYHTVRGALDTTGVDSRMQGRSKYGTKKPKK.

Residue Asp89 is modified to 3-methylthioaspartic acid. Positions 105–124 (TGVDSRMQGRSKYGTKKPKK) are disordered.

This sequence belongs to the universal ribosomal protein uS12 family. Part of the 30S ribosomal subunit. Contacts proteins S8 and S17. May interact with IF1 in the 30S initiation complex.

Its function is as follows. With S4 and S5 plays an important role in translational accuracy. Functionally, interacts with and stabilizes bases of the 16S rRNA that are involved in tRNA selection in the A site and with the mRNA backbone. Located at the interface of the 30S and 50S subunits, it traverses the body of the 30S subunit contacting proteins on the other side and probably holding the rRNA structure together. The combined cluster of proteins S8, S12 and S17 appears to hold together the shoulder and platform of the 30S subunit. In Vesicomyosocius okutanii subsp. Calyptogena okutanii (strain HA), this protein is Small ribosomal subunit protein uS12.